The primary structure comprises 141 residues: Large ribosomal subunit protein uL11 (141 aa).

This sequence belongs to the universal ribosomal protein uL11 family. In terms of assembly, part of the ribosomal stalk of the 50S ribosomal subunit. Interacts with L10 and the large rRNA to form the base of the stalk. L10 forms an elongated spine to which L12 dimers bind in a sequential fashion forming a multimeric L10(L12)X complex. In terms of processing, one or more lysine residues are methylated.

Its function is as follows. Forms part of the ribosomal stalk which helps the ribosome interact with GTP-bound translation factors. The polypeptide is Large ribosomal subunit protein uL11 (Ruegeria sp. (strain TM1040) (Silicibacter sp.)).